Reading from the N-terminus, the 443-residue chain is UDP-N-acetylmuramate--L-alanine ligase (443 aa).

ATP is bound at residue 110–116 (GAHGKTS).

It belongs to the MurCDEF family.

It is found in the cytoplasm. It catalyses the reaction UDP-N-acetyl-alpha-D-muramate + L-alanine + ATP = UDP-N-acetyl-alpha-D-muramoyl-L-alanine + ADP + phosphate + H(+). Its pathway is cell wall biogenesis; peptidoglycan biosynthesis. Cell wall formation. This chain is UDP-N-acetylmuramate--L-alanine ligase, found in Lactococcus lactis subsp. cremoris (strain SK11).